The chain runs to 251 residues: Flap endonuclease Xni (251 aa).

Residue Asp104 coordinates Mg(2+). One can recognise a 5'-3' exonuclease domain in the interval 160–249 (VLPRQLPDYW…IDGNLQQLRL (90 aa)). Leu171, Ala172, Pro180, Val182, and Ile185 together coordinate K(+). The segment at 184-189 (GIGPKS) is interaction with DNA.

The protein belongs to the Xni family. The cofactor is Mg(2+). It depends on K(+) as a cofactor.

Functionally, has flap endonuclease activity. During DNA replication, flap endonucleases cleave the 5'-overhanging flap structure that is generated by displacement synthesis when DNA polymerase encounters the 5'-end of a downstream Okazaki fragment. This is Flap endonuclease Xni from Salmonella typhimurium (strain LT2 / SGSC1412 / ATCC 700720).